The primary structure comprises 446 residues: Adenylosuccinate synthetase 1 (446 aa).

GTP-binding positions include 20–26 (GDEGKGK) and 48–50 (GHT). Residue Asp21 is the Proton acceptor of the active site. Asp21 and Gly48 together coordinate Mg(2+). IMP is bound by residues 21–24 (DEGK), 46–49 (NAGH), Thr137, Arg151, Gln232, Thr247, and Arg319. The active-site Proton donor is the His49. 315-321 (SVTGRPR) lines the substrate pocket. Residues Arg321, 347–349 (KLD), and 429–431 (STG) contribute to the GTP site.

This sequence belongs to the adenylosuccinate synthetase family. In terms of assembly, homodimer. The cofactor is Mg(2+).

It is found in the cytoplasm. It catalyses the reaction IMP + L-aspartate + GTP = N(6)-(1,2-dicarboxyethyl)-AMP + GDP + phosphate + 2 H(+). It functions in the pathway purine metabolism; AMP biosynthesis via de novo pathway; AMP from IMP: step 1/2. Plays an important role in the de novo pathway of purine nucleotide biosynthesis. Catalyzes the first committed step in the biosynthesis of AMP from IMP. The chain is Adenylosuccinate synthetase 1 from Cupriavidus pinatubonensis (strain JMP 134 / LMG 1197) (Cupriavidus necator (strain JMP 134)).